A 402-amino-acid polypeptide reads, in one-letter code: MDTKAFKRSLQQSNNYHRKGFGHETEVMGTMNTEYQSSLIQKIRENNYQWQEGDVTIKLAEAFGFCWGVERAVAMAYETRQHFPQEKIWITNEIIHNPSVNQRLLEMNVGFIEVINGSKDFSVVEAGDVVILPAFGASVTEMQLLNDKGCTIVDTTCPWVSKVWNSVEKHKKKDYTSIIHGKYKHEETVATSSFAGTYLVVLNLKEAQYVCDYILNGGNKDEFLEKFKNAHSEGFDPDKDLIRLGIANQTTMLKSETEQIGKLFETTMLKKYGPTELNEHFMSFNTICDATQERQDAMLNLVEEEVDVMVVIGGFNSSNTTHLQEISIEKGIDSYHIDSDKRILPGNKIEHKPLEKDIETKENWLPDGKIIVGVTSGASTPDKVVEAVIERIFEEKNAGVLV.

Cysteine 66 contacts [4Fe-4S] cluster. Histidine 96 is a binding site for (2E)-4-hydroxy-3-methylbut-2-enyl diphosphate. Histidine 96 contributes to the dimethylallyl diphosphate binding site. Histidine 96 contributes to the isopentenyl diphosphate binding site. Position 157 (cysteine 157) interacts with [4Fe-4S] cluster. A (2E)-4-hydroxy-3-methylbut-2-enyl diphosphate-binding site is contributed by histidine 185. Position 185 (histidine 185) interacts with dimethylallyl diphosphate. Isopentenyl diphosphate is bound at residue histidine 185. The active-site Proton donor is glutamate 187. A (2E)-4-hydroxy-3-methylbut-2-enyl diphosphate-binding site is contributed by threonine 250. A [4Fe-4S] cluster-binding site is contributed by cysteine 288. Residues serine 317, serine 318, asparagine 319, and serine 379 each contribute to the (2E)-4-hydroxy-3-methylbut-2-enyl diphosphate site. Dimethylallyl diphosphate-binding residues include serine 317, serine 318, asparagine 319, and serine 379. Isopentenyl diphosphate-binding residues include serine 317, serine 318, asparagine 319, and serine 379.

Belongs to the IspH family. [4Fe-4S] cluster is required as a cofactor.

It catalyses the reaction isopentenyl diphosphate + 2 oxidized [2Fe-2S]-[ferredoxin] + H2O = (2E)-4-hydroxy-3-methylbut-2-enyl diphosphate + 2 reduced [2Fe-2S]-[ferredoxin] + 2 H(+). The catalysed reaction is dimethylallyl diphosphate + 2 oxidized [2Fe-2S]-[ferredoxin] + H2O = (2E)-4-hydroxy-3-methylbut-2-enyl diphosphate + 2 reduced [2Fe-2S]-[ferredoxin] + 2 H(+). Its pathway is isoprenoid biosynthesis; dimethylallyl diphosphate biosynthesis; dimethylallyl diphosphate from (2E)-4-hydroxy-3-methylbutenyl diphosphate: step 1/1. It functions in the pathway isoprenoid biosynthesis; isopentenyl diphosphate biosynthesis via DXP pathway; isopentenyl diphosphate from 1-deoxy-D-xylulose 5-phosphate: step 6/6. Its function is as follows. Catalyzes the conversion of 1-hydroxy-2-methyl-2-(E)-butenyl 4-diphosphate (HMBPP) into a mixture of isopentenyl diphosphate (IPP) and dimethylallyl diphosphate (DMAPP). Acts in the terminal step of the DOXP/MEP pathway for isoprenoid precursor biosynthesis. The polypeptide is 4-hydroxy-3-methylbut-2-enyl diphosphate reductase (Crocosphaera subtropica (strain ATCC 51142 / BH68) (Cyanothece sp. (strain ATCC 51142))).